Consider the following 95-residue polypeptide: MNLKPLNDRVLVKRLESEEKTAGGLYIPDTAKEKPSRGEVIAVGPGKTADDGKVIAMTVKTGDVVLFNKYAGTEVKLDGVDHLVMREDDILAIIQ.

Belongs to the GroES chaperonin family. In terms of assembly, heptamer of 7 subunits arranged in a ring. Interacts with the chaperonin GroEL.

It is found in the cytoplasm. Functionally, together with the chaperonin GroEL, plays an essential role in assisting protein folding. The GroEL-GroES system forms a nano-cage that allows encapsulation of the non-native substrate proteins and provides a physical environment optimized to promote and accelerate protein folding. GroES binds to the apical surface of the GroEL ring, thereby capping the opening of the GroEL channel. This chain is Co-chaperonin GroES, found in Oleidesulfovibrio alaskensis (strain ATCC BAA-1058 / DSM 17464 / G20) (Desulfovibrio alaskensis).